Consider the following 491-residue polypeptide: MSIKLTEQEQIRLSKLDTYKKLNINPFEKIEKNLNYVYSKDLKEKYSSYSKEELESMDLYFDLYGRITSQRGPFIVIKDYFDKIQLYFNKKEHLDLAELVSNLDLGDIIHAHGKLSKTNTGELVVKIKTLKLLTKVLKPLPDKFHGLSDIEEIYRHRYLDLISNEHSMEVFKKRSKIISLIRKYFDSNMYLEVETPFLSNYISGAAAKPFKTFHNALSQEFTLRIATEIPLKKLLIGGIDRVYEMGRIFRNEGIDTTHNPEFTTIEFYEAYSNLEKMMQRTEELFKLIAKELNLKTLQNKGEEINLEEPFKRVDMIDEVSKATGVDFRNVTLEKALELAKEHGVKLKKYYTVGHIANELFEKLIEKTLVQPTFVMGHPIEISPLTYEASDPRYVERAELFINGKEYANMYTELSSPIEQLKRFEDQLNEKAQGNDESSDIDWDFIEALKYGMPPAGGCGIGIDRLVMLFTEKESIRDVLFFPTLKNKKSQG.

The Mg(2+) site is built by E398 and E405.

The protein belongs to the class-II aminoacyl-tRNA synthetase family. Homodimer. Mg(2+) serves as cofactor.

It localises to the cytoplasm. The catalysed reaction is tRNA(Lys) + L-lysine + ATP = L-lysyl-tRNA(Lys) + AMP + diphosphate. This chain is Lysine--tRNA ligase, found in Mycoplasmopsis synoviae (strain 53) (Mycoplasma synoviae).